The primary structure comprises 765 residues: Zinc metalloproteinase nas-37 (765 aa).

The signal sequence occupies residues 1 to 22; sequence MKSQACLKVCLALIGLVSIVST. Positions 23–114 are excised as a propeptide; that stretch reads AYIANDVVSD…SESNSPRSRR (92 aa). In terms of domain architecture, Peptidase M12A spans 115–308; the sequence is QAHPDPRNFW…AKMINTRYCS (194 aa). N-linked (GlcNAc...) asparagine glycosylation occurs at N126. 6 disulfides stabilise this stretch: C156/C307, C177/C196, C311/C331, C333/C342, C350/C374, and C400/C420. Residue H204 participates in Zn(2+) binding. The active site involves E205. Residues H208 and H214 each contribute to the Zn(2+) site. An EGF-like domain is found at 303–343; the sequence is NTRYCSNVCQRSLPCLNEGYTDPNNCGRCRCPSGYGGTYCE. The CUB domain maps to 350 to 458; it reads CGGSLTASSS…RGFTLKYRAI (109 aa). Positions 513-573 are disordered; sequence KYSSEELYDP…TRPTPTTTVA (61 aa). Low complexity-rich tracts occupy residues 526–545 and 562–573; these read LSPSSSSASPALLLPSDASP and ALTRPTPTTTVA. One can recognise a TSP type-1 domain in the interval 576–627; it reads TASWSAWGEWSACSQPCGGCGTKTRVRACYGGNQVCPGSNLDRESCNAHACA. 3 disulfide bridges follow: C588–C621, C592–C626, and C604–C611.

Requires Zn(2+) as cofactor. In terms of tissue distribution, expressed in hypodermal cells. Not expressed in the seam cells in L1 to L3 larvae, but it is present in seam cells of L4 larvae. Also expressed in attachment points of the cuticle at the anterior end of larvae, in the arcade cells in the mouth, the anterior pharynx, the amphid socket cells, and in the rectal epithelial cells at the posterior end of the larvae (at protein level).

It is found in the secreted. Metalloprotease. Plays an essential role in molting, a process during larval stages in which a new cuticle is formed and the old cuticle is shed. Required during ecdysis, the opening of the cuticle to allow the worm to escape. The chain is Zinc metalloproteinase nas-37 (nas-37) from Caenorhabditis elegans.